The primary structure comprises 434 residues: Beta-enolase (434 aa).

Residue A2 is modified to N-acetylalanine. T72 is subject to Phosphothreonine. Residues S83 and S157 each carry the phosphoserine modification. Positions 158 and 167 each coordinate substrate. Position 176 is a phosphoserine (S176). At T205 the chain carries Phosphothreonine. E210 acts as the Proton donor in catalysis. Residue T229 is modified to Phosphothreonine. Residue Y236 is modified to Phosphotyrosine. A Mg(2+)-binding site is contributed by D245. S263 carries the phosphoserine modification. Substrate is bound by residues E293 and D318. E293 and D318 together coordinate Mg(2+). Residue K343 is the Proton acceptor of the active site. Residues 370 to 373 (SHRS) and K394 each bind substrate.

Belongs to the enolase family. In terms of assembly, mammalian enolase is composed of 3 isozyme subunits, alpha, beta and gamma, which can form homodimers or heterodimers which are cell-type and development-specific. Interacts with PNKD. Mg(2+) is required as a cofactor. As to expression, the alpha/alpha homodimer is expressed in embryo and in most adult tissues. The alpha/beta heterodimer and the beta/beta homodimer are found in striated muscle, and the alpha/gamma heterodimer and the gamma/gamma homodimer in neurons.

The protein resides in the cytoplasm. It catalyses the reaction (2R)-2-phosphoglycerate = phosphoenolpyruvate + H2O. It participates in carbohydrate degradation; glycolysis; pyruvate from D-glyceraldehyde 3-phosphate: step 4/5. Its function is as follows. Glycolytic enzyme that catalyzes the conversion of 2-phosphoglycerate to phosphoenolpyruvate. Appears to have a function in striated muscle development and regeneration. The polypeptide is Beta-enolase (ENO3) (Homo sapiens (Human)).